The following is a 604-amino-acid chain: Sulfite reductase [NADPH] flavoprotein alpha-component (604 aa).

In terms of domain architecture, Flavodoxin-like spans 68–206 (LSIIFASQTG…PAAEWRKQAL (139 aa)). FMN-binding positions include 74–79 (SQTGNA), 121–124 (STNG), and 157–166 (LGDSSYEFFC). The 215-residue stretch at 239 to 453 (QNPYTATLLT…VEHNNNFKLP (215 aa)) folds into the FAD-binding FR-type domain. Residues Thr327, Gly361, 391-394 (RLYS), 409-411 (TVG), Tyr415, and 424-427 (GGAS) each bind FAD. NADP(+)-binding positions include 524–525 (SR), 530–534 (KVYVQ), and Asp566. Position 604 (Tyr604) interacts with FAD.

This sequence belongs to the NADPH-dependent sulphite reductase flavoprotein subunit CysJ family. In the N-terminal section; belongs to the flavodoxin family. The protein in the C-terminal section; belongs to the flavoprotein pyridine nucleotide cytochrome reductase family. Alpha(8)-beta(8). The alpha component is a flavoprotein, the beta component is a hemoprotein. The cofactor is FAD. FMN serves as cofactor.

It catalyses the reaction hydrogen sulfide + 3 NADP(+) + 3 H2O = sulfite + 3 NADPH + 4 H(+). The protein operates within sulfur metabolism; hydrogen sulfide biosynthesis; hydrogen sulfide from sulfite (NADPH route): step 1/1. In terms of biological role, component of the sulfite reductase complex that catalyzes the 6-electron reduction of sulfite to sulfide. This is one of several activities required for the biosynthesis of L-cysteine from sulfate. The flavoprotein component catalyzes the electron flow from NADPH -&gt; FAD -&gt; FMN to the hemoprotein component. This chain is Sulfite reductase [NADPH] flavoprotein alpha-component, found in Aliivibrio fischeri (strain ATCC 700601 / ES114) (Vibrio fischeri).